We begin with the raw amino-acid sequence, 607 residues long: Guanine nucleotide-binding protein-like 1 (607 aa).

The segment covering 1–14 (MPRKKPFSVKQKKK) has biased composition (basic residues). The tract at residues 1-81 (MPRKKPFSVK…GPRGYDPNRY (81 aa)) is disordered. Over residues 15–26 (QLQDKRERKRGL) the composition is skewed to basic and acidic residues. A phosphoserine mark is found at Ser32, Ser33, and Ser34. Phosphothreonine occurs at positions 48 and 50. Phosphoserine occurs at positions 51 and 68. Residues 178–418 (WRQLWRVLEM…LCDCPGLIFP (241 aa)) form the CP-type G domain. 225–228 (NKVD) lines the GTP pocket. A Phosphoserine modification is found at Ser324. GTP is bound by residues 367–374 (GFPNVGKS) and 411–415 (DCPGL). A disordered region spans residues 547-607 (GPAGDEEEEE…PYALLGEDEC (61 aa)). Acidic residues predominate over residues 550–584 (GDEEEEEEEELSSSCEEEGEEDRDADEEGEGDEDT). Phosphoserine is present on residues Ser561, Ser562, and Ser563.

Belongs to the TRAFAC class YlqF/YawG GTPase family.

In terms of biological role, possible regulatory or functional link with the histocompatibility cluster. This chain is Guanine nucleotide-binding protein-like 1 (GNL1), found in Pongo abelii (Sumatran orangutan).